Here is a 286-residue protein sequence, read N- to C-terminus: NADPH-dependent 7-cyano-7-deazaguanine reductase (286 aa).

92–94 serves as a coordination point for substrate; it reads IES. Residue 94-95 coordinates NADPH; the sequence is SK. The Thioimide intermediate role is filled by Cys194. The Proton donor role is filled by Asp201. 233 to 234 lines the substrate pocket; that stretch reads HE. 262 to 263 is a binding site for NADPH; the sequence is RG.

Belongs to the GTP cyclohydrolase I family. QueF type 2 subfamily. In terms of assembly, homodimer.

Its subcellular location is the cytoplasm. The enzyme catalyses 7-aminomethyl-7-carbaguanine + 2 NADP(+) = 7-cyano-7-deazaguanine + 2 NADPH + 3 H(+). It participates in tRNA modification; tRNA-queuosine biosynthesis. In terms of biological role, catalyzes the NADPH-dependent reduction of 7-cyano-7-deazaguanine (preQ0) to 7-aminomethyl-7-deazaguanine (preQ1). The protein is NADPH-dependent 7-cyano-7-deazaguanine reductase of Shewanella sp. (strain MR-4).